A 238-amino-acid polypeptide reads, in one-letter code: Ribonuclease PH (238 aa).

Phosphate is bound by residues Arg-86 and 124–126 (GTR).

This sequence belongs to the RNase PH family. Homohexameric ring arranged as a trimer of dimers.

It catalyses the reaction tRNA(n+1) + phosphate = tRNA(n) + a ribonucleoside 5'-diphosphate. Phosphorolytic 3'-5' exoribonuclease that plays an important role in tRNA 3'-end maturation. Removes nucleotide residues following the 3'-CCA terminus of tRNAs; can also add nucleotides to the ends of RNA molecules by using nucleoside diphosphates as substrates, but this may not be physiologically important. Probably plays a role in initiation of 16S rRNA degradation (leading to ribosome degradation) during starvation. This Sphingopyxis alaskensis (strain DSM 13593 / LMG 18877 / RB2256) (Sphingomonas alaskensis) protein is Ribonuclease PH.